Consider the following 282-residue polypeptide: DegV domain-containing protein SPy_0865/M5005_Spy0672 (282 aa).

Residues Leu3 to Pro280 enclose the DegV domain. Hexadecanoate-binding residues include Thr61 and Ser94.

Functionally, may bind long-chain fatty acids, such as palmitate, and may play a role in lipid transport or fatty acid metabolism. This Streptococcus pyogenes serotype M1 protein is DegV domain-containing protein SPy_0865/M5005_Spy0672.